A 215-amino-acid polypeptide reads, in one-letter code: MDFSIEQKYQELLKIISSVSRETMQDLMHFESLIIQWNKHINLISSSTIPLLWTRHILDSAQIYPLHSDLLHWCDLGSGGGFPAIVIAIFMKEKKTGHIDLVESNGKKVAFLRTVIAQLDLPATVYHCRIEDVTQKIKNPEVITARGLACLDDLLRLIFPLLTQKTIALLQKGRDYSKEIKNASANWQFDLLKHKSKIDENSVILEISQVRSFRG.

Residues G77, F82, 130 to 131, and R146 contribute to the S-adenosyl-L-methionine site; that span reads IE.

This sequence belongs to the methyltransferase superfamily. RNA methyltransferase RsmG family.

It is found in the cytoplasm. The catalysed reaction is guanosine(527) in 16S rRNA + S-adenosyl-L-methionine = N(7)-methylguanosine(527) in 16S rRNA + S-adenosyl-L-homocysteine. Functionally, specifically methylates the N7 position of guanine in position 527 of 16S rRNA. The chain is Ribosomal RNA small subunit methyltransferase G from Bartonella henselae (strain ATCC 49882 / DSM 28221 / CCUG 30454 / Houston 1) (Rochalimaea henselae).